Here is a 129-residue protein sequence, read N- to C-terminus: UPF0102 protein Mnod_0024 (129 aa).

It belongs to the UPF0102 family.

This Methylobacterium nodulans (strain LMG 21967 / CNCM I-2342 / ORS 2060) protein is UPF0102 protein Mnod_0024.